The sequence spans 74 residues: UPF0346 protein PEPE_1063 (74 aa).

This sequence belongs to the UPF0346 family.

The protein is UPF0346 protein PEPE_1063 of Pediococcus pentosaceus (strain ATCC 25745 / CCUG 21536 / LMG 10740 / 183-1w).